Consider the following 504-residue polypeptide: Maturase K (504 aa).

It belongs to the intron maturase 2 family. MatK subfamily.

The protein localises to the plastid. It is found in the chloroplast. In terms of biological role, usually encoded in the trnK tRNA gene intron. Probably assists in splicing its own and other chloroplast group II introns. This chain is Maturase K, found in Lobularia maritima (Sweet alyssum).